A 152-amino-acid polypeptide reads, in one-letter code: Large ribosomal subunit protein bL9 (152 aa).

The protein belongs to the bacterial ribosomal protein bL9 family.

In terms of biological role, binds to the 23S rRNA. The sequence is that of Large ribosomal subunit protein bL9 from Nocardia farcinica (strain IFM 10152).